A 364-amino-acid polypeptide reads, in one-letter code: MKALILVGGFGTRLRPLTLTLPKPLVEFGNRPMILHQVESLAAAGVTDIVLAVNYRPDVMVSALKKYEEQYNVKIEFSVESEPLGTAGPLKLAEKILGKDDSPFFVLNSDVICDYPFKELAEFHKKHGDEGTIVVTKVDEPSKYGVVVHKPNHPSRIDRFVEKPVEFVGNRINAGIYIMNPSVLNRIELRPTSIEQETFPAICKDGQLHSFDLEGFWMDVGQPKDFLSGTCLYLTSLAKRNSKLLAPNSEPYVYGGNVMVDPSAKIGKNCRIGPNVVIGPNVVVGDGVRLQRCVLLENSKVKDHAWVKSTIVGWNSSVGRWARLENVTVLGDDVTIADEVYVNGGSILPHKSIKQNVDVPAIIM.

This sequence belongs to the transferase hexapeptide repeat family.

It is found in the cytoplasm. It carries out the reaction alpha-D-mannose 1-phosphate + GTP + H(+) = GDP-alpha-D-mannose + diphosphate. It functions in the pathway nucleotide-sugar biosynthesis; GDP-alpha-D-mannose biosynthesis; GDP-alpha-D-mannose from alpha-D-mannose 1-phosphate (GTP route): step 1/1. Its function is as follows. Involved in cell wall synthesis where it is required for glycosylation. Involved in cell cycle progression through cell-size checkpoint. This Aspergillus oryzae (strain ATCC 42149 / RIB 40) (Yellow koji mold) protein is Mannose-1-phosphate guanyltransferase (mpg1).